The primary structure comprises 373 residues: Beta sliding clamp homolog GriR (373 aa).

It belongs to the beta sliding clamp family. In terms of assembly, forms a ring-shaped head-to-tail homodimer around DNA which binds and tethers DNA polymerases and other proteins to the DNA. The DNA replisome complex has a single clamp-loading complex (3 tau and 1 each of delta, delta', psi and chi subunits) which binds 3 Pol III cores (1 core on the leading strand and 2 on the lagging strand) each with a beta sliding clamp dimer. Additional proteins in the replisome are other copies of gamma, psi and chi, Ssb, DNA helicase and RNA primase.

The protein resides in the cytoplasm. A homolog of the beta sliding clamp protein encoded within the biosynthetic cluster for griselimycin synthesis. Upon expression in S.coelicolor A3(2), which is susceptible to this antibiotic, confers resistance to griselimycin. The beta sliding clamp confers DNA tethering and processivity to DNA polymerases and other proteins. Acts as a clamp, forming a ring around DNA (a reaction catalyzed by the clamp-loading complex) which diffuses in an ATP-independent manner freely and bidirectionally along dsDNA. Initially characterized for its ability to contact the catalytic subunit of DNA polymerase III (Pol III), a complex, multichain enzyme responsible for most of the replicative synthesis in bacteria; Pol III exhibits 3'-5' exonuclease proofreading activity. The beta chain is required for initiation of replication as well as for processivity of DNA replication. This is Beta sliding clamp homolog GriR from Streptomyces muensis.